Consider the following 589-residue polypeptide: MGGGGNLVDGVRRWLFQRPSSSSSSSSSNNNNNNHEQPIFNSSSFSSSSNPNHSANSGELIIEEDLDFSGLTLINVPKRNHLPMDPHKKGETEFFTEYGEANRYQIQEVVGKGSYGVVASAVDSHTGERVAIKKINDVFEHVSDATRILREIKLLRLLRHPDVVEIKHIMLPPSRREFRDIYVVFELMESDLHQVIKANDDLTPEHYQFFLYQLLRGLKYVHAANVFHRDLKPKNILANADCKLKICDFGLARVSFNDAPTAIFWTDYVATRWYRAPELCGSFFSKYTPAIDIWSVGCIFAEMLLGKPLFPGKNVVHQLDLMTDFLGTPPPESISRIRNEKARRYLSSMRKKQPVPFSHKFPKADPLALRLLERLLAFDPKDRASAEDALADPYFSGLSNSEREPTTQPISKLEFDFERKKLVKDDVRELIYREILEYHPQMLEEYLRGGDQLSFMYPSGVDRFKRQFAHLEENQGKPGAAGGGRSTALHRHHASLPRERVPAPNGETAEESSDVERRAAAAVASTLESEEADNGGGYSARNLMKSASISGSKCIGVQSKTDKEDTIAEEEDNETVAELTDKVASLHNS.

Residues 18–56 form a disordered region; it reads RPSSSSSSSSSNNNNNNHEQPIFNSSSFSSSSNPNHSAN. Composition is skewed to low complexity over residues 20–34 and 41–56; these read SSSSSSSSSNNNNNN and NSSSFSSSSNPNHSAN. The region spanning 104–395 is the Protein kinase domain; it reads YQIQEVVGKG…AEDALADPYF (292 aa). Residues 110 to 118 and lysine 133 each bind ATP; that span reads VGKGSYGVV. The Proton acceptor role is filled by aspartate 230. Threonine 266 is modified (phosphothreonine). The short motif at 266 to 268 is the TXY element; the sequence is TDY. Tyrosine 268 carries the phosphotyrosine modification. Threonine 271 carries the post-translational modification Phosphothreonine. The segment at 474–589 is disordered; it reads NQGKPGAAGG…TDKVASLHNS (116 aa).

It belongs to the protein kinase superfamily. CMGC Ser/Thr protein kinase family. MAP kinase subfamily. As to quaternary structure, interacts with CAM3, CAM4 and CAM7 in an calcium-dependent manner. Post-translationally, dually phosphorylated on Thr-266 and Tyr-268, which activates the enzyme. Autophosphorylated. As to expression, ubiquitous.

It carries out the reaction L-seryl-[protein] + ATP = O-phospho-L-seryl-[protein] + ADP + H(+). It catalyses the reaction L-threonyl-[protein] + ATP = O-phospho-L-threonyl-[protein] + ADP + H(+). Its activity is regulated as follows. Activated by threonine and tyrosine phosphorylation. Activated by two independent mechanisms, the binding of CAMs in a calcium-dependent manner and the phosphorylation by MAP kinase kinase MKK3. Activated in response to mechanical wounding, hydrogen peroxide and jasmonic acid (JA). Its function is as follows. MKK3-MPK8 and CAMs-MPK8 modules negatively regulates ROS accumulation through controlling expression of the RBOHD gene during wounding. In Arabidopsis thaliana (Mouse-ear cress), this protein is Mitogen-activated protein kinase 8 (MPK8).